We begin with the raw amino-acid sequence, 244 residues long: 7-cyano-7-deazaguanine synthase (244 aa).

Position 14 to 24 (14 to 24) interacts with ATP; the sequence is FSGGQDSATCV. The Zn(2+) site is built by Cys-202, Cys-217, Cys-220, and Cys-223.

Belongs to the QueC family. It depends on Zn(2+) as a cofactor.

It carries out the reaction 7-carboxy-7-deazaguanine + NH4(+) + ATP = 7-cyano-7-deazaguanine + ADP + phosphate + H2O + H(+). It participates in purine metabolism; 7-cyano-7-deazaguanine biosynthesis. Catalyzes the ATP-dependent conversion of 7-carboxy-7-deazaguanine (CDG) to 7-cyano-7-deazaguanine (preQ(0)). In Burkholderia multivorans (strain ATCC 17616 / 249), this protein is 7-cyano-7-deazaguanine synthase.